We begin with the raw amino-acid sequence, 303 residues long: 3-methyl-2-oxobutanoate hydroxymethyltransferase (303 aa).

Residues 1 to 10 (MDSSGTVRNQ) are compositionally biased toward polar residues. A disordered region spans residues 1 to 41 (MDSSGTVRNQTSDDHSRPADAAGTAATLYGAPAETRSPRRS). Mg(2+) is bound by residues Asp-84 and Asp-123. Residues 84–85 (DS), Asp-123, and Lys-153 contribute to the 3-methyl-2-oxobutanoate site. Mg(2+) is bound at residue Glu-155. Glu-221 serves as the catalytic Proton acceptor.

It belongs to the PanB family. In terms of assembly, homodecamer; pentamer of dimers. Requires Mg(2+) as cofactor.

Its subcellular location is the cytoplasm. The enzyme catalyses 3-methyl-2-oxobutanoate + (6R)-5,10-methylene-5,6,7,8-tetrahydrofolate + H2O = 2-dehydropantoate + (6S)-5,6,7,8-tetrahydrofolate. It participates in cofactor biosynthesis; (R)-pantothenate biosynthesis; (R)-pantoate from 3-methyl-2-oxobutanoate: step 1/2. Catalyzes the reversible reaction in which hydroxymethyl group from 5,10-methylenetetrahydrofolate is transferred onto alpha-ketoisovalerate to form ketopantoate. The protein is 3-methyl-2-oxobutanoate hydroxymethyltransferase of Frankia alni (strain DSM 45986 / CECT 9034 / ACN14a).